A 387-amino-acid polypeptide reads, in one-letter code: Transcription termination/antitermination protein NusA (387 aa).

One can recognise an S1 motif domain in the interval glycine 145–arginine 209. Positions alanine 312 to phenylalanine 379 constitute a KH domain.

It belongs to the NusA family. In terms of assembly, monomer. Binds directly to the core enzyme of the DNA-dependent RNA polymerase and to nascent RNA.

The protein localises to the cytoplasm. Participates in both transcription termination and antitermination. The polypeptide is Transcription termination/antitermination protein NusA (Thermus thermophilus (strain ATCC 27634 / DSM 579 / HB8)).